Consider the following 464-residue polypeptide: ATP synthase subunit beta (464 aa).

Glycine 153–threonine 160 is a binding site for ATP.

The protein belongs to the ATPase alpha/beta chains family. In terms of assembly, F-type ATPases have 2 components, CF(1) - the catalytic core - and CF(0) - the membrane proton channel. CF(1) has five subunits: alpha(3), beta(3), gamma(1), delta(1), epsilon(1). CF(0) has three main subunits: a(1), b(2) and c(9-12). The alpha and beta chains form an alternating ring which encloses part of the gamma chain. CF(1) is attached to CF(0) by a central stalk formed by the gamma and epsilon chains, while a peripheral stalk is formed by the delta and b chains.

It localises to the cell inner membrane. It carries out the reaction ATP + H2O + 4 H(+)(in) = ADP + phosphate + 5 H(+)(out). Functionally, produces ATP from ADP in the presence of a proton gradient across the membrane. The catalytic sites are hosted primarily by the beta subunits. The chain is ATP synthase subunit beta from Burkholderia ambifaria (strain ATCC BAA-244 / DSM 16087 / CCUG 44356 / LMG 19182 / AMMD) (Burkholderia cepacia (strain AMMD)).